Consider the following 305-residue polypeptide: tRNA dimethylallyltransferase 2 (305 aa).

14–21 lines the ATP pocket; that stretch reads GPTASGKT. 16–21 provides a ligand contact to substrate; that stretch reads TASGKT. Positions 39–42 are interaction with substrate tRNA; it reads DSRQ.

It belongs to the IPP transferase family. In terms of assembly, monomer. The cofactor is Mg(2+).

It catalyses the reaction adenosine(37) in tRNA + dimethylallyl diphosphate = N(6)-dimethylallyladenosine(37) in tRNA + diphosphate. In terms of biological role, catalyzes the transfer of a dimethylallyl group onto the adenine at position 37 in tRNAs that read codons beginning with uridine, leading to the formation of N6-(dimethylallyl)adenosine (i(6)A). This is tRNA dimethylallyltransferase 2 from Trichlorobacter lovleyi (strain ATCC BAA-1151 / DSM 17278 / SZ) (Geobacter lovleyi).